Here is a 108-residue protein sequence, read N- to C-terminus: Nitrite reductase (NADH) small subunit (108 aa).

This sequence to B.subtilis NasE. As to quaternary structure, associates with NirB.

The protein localises to the cytoplasm. It carries out the reaction NH4(+) + 3 NAD(+) + 2 H2O = nitrite + 3 NADH + 5 H(+). Functionally, required for activity of the reductase. This is Nitrite reductase (NADH) small subunit (nirD) from Escherichia coli O157:H7.